Here is a 630-residue protein sequence, read N- to C-terminus: Phosphomethylpyrimidine synthase (630 aa).

Residues Asn-227, Met-256, Tyr-285, His-321, 341 to 343, 382 to 385, and Glu-421 each bind substrate; these read SRG and DGLR. His-425 contributes to the Zn(2+) binding site. Residue Tyr-448 participates in substrate binding. Position 489 (His-489) interacts with Zn(2+). Cys-569, Cys-572, and Cys-577 together coordinate [4Fe-4S] cluster.

The protein belongs to the ThiC family. As to quaternary structure, homodimer. Requires [4Fe-4S] cluster as cofactor.

The enzyme catalyses 5-amino-1-(5-phospho-beta-D-ribosyl)imidazole + S-adenosyl-L-methionine = 4-amino-2-methyl-5-(phosphooxymethyl)pyrimidine + CO + 5'-deoxyadenosine + formate + L-methionine + 3 H(+). It functions in the pathway cofactor biosynthesis; thiamine diphosphate biosynthesis. Its function is as follows. Catalyzes the synthesis of the hydroxymethylpyrimidine phosphate (HMP-P) moiety of thiamine from aminoimidazole ribotide (AIR) in a radical S-adenosyl-L-methionine (SAM)-dependent reaction. The polypeptide is Phosphomethylpyrimidine synthase (Hydrogenovibrio crunogenus (strain DSM 25203 / XCL-2) (Thiomicrospira crunogena)).